We begin with the raw amino-acid sequence, 40 residues long: Photosystem II reaction center protein J (40 aa).

A helical transmembrane segment spans residues 8-28 (IPLWLIGTVVGTPVISLVGIF).

This sequence belongs to the PsbJ family. PSII is composed of 1 copy each of membrane proteins PsbA, PsbB, PsbC, PsbD, PsbE, PsbF, PsbH, PsbI, PsbJ, PsbK, PsbL, PsbM, PsbT, PsbX, PsbY, PsbZ, Psb30/Ycf12, at least 3 peripheral proteins of the oxygen-evolving complex and a large number of cofactors. It forms dimeric complexes.

It is found in the plastid. The protein localises to the chloroplast thylakoid membrane. One of the components of the core complex of photosystem II (PSII). PSII is a light-driven water:plastoquinone oxidoreductase that uses light energy to abstract electrons from H(2)O, generating O(2) and a proton gradient subsequently used for ATP formation. It consists of a core antenna complex that captures photons, and an electron transfer chain that converts photonic excitation into a charge separation. This Huperzia lucidula (Shining clubmoss) protein is Photosystem II reaction center protein J.